Reading from the N-terminus, the 504-residue chain is ATP synthase subunit alpha 2 (504 aa).

169–176 (GDRQTGKT) lines the ATP pocket.

This sequence belongs to the ATPase alpha/beta chains family. As to quaternary structure, F-type ATPases have 2 components, CF(1) - the catalytic core - and CF(0) - the membrane proton channel. CF(1) has five subunits: alpha(3), beta(3), gamma(1), delta(1), epsilon(1). CF(0) has three main subunits: a(1), b(2) and c(9-12). The alpha and beta chains form an alternating ring which encloses part of the gamma chain. CF(1) is attached to CF(0) by a central stalk formed by the gamma and epsilon chains, while a peripheral stalk is formed by the delta and b chains.

Its subcellular location is the cell membrane. The enzyme catalyses ATP + H2O + 4 H(+)(in) = ADP + phosphate + 5 H(+)(out). Its function is as follows. Produces ATP from ADP in the presence of a proton gradient across the membrane. The alpha chain is a regulatory subunit. The protein is ATP synthase subunit alpha 2 of Listeria monocytogenes serotype 4b (strain F2365).